The chain runs to 149 residues: Large ribosomal subunit protein uL15 (149 aa).

Positions Met1–Lys28 are enriched in basic and acidic residues. The segment at Met1–Met54 is disordered.

This sequence belongs to the universal ribosomal protein uL15 family. Part of the 50S ribosomal subunit.

Functionally, binds to the 23S rRNA. This is Large ribosomal subunit protein uL15 from Saccharopolyspora erythraea (strain ATCC 11635 / DSM 40517 / JCM 4748 / NBRC 13426 / NCIMB 8594 / NRRL 2338).